A 302-amino-acid polypeptide reads, in one-letter code: Recombination-associated protein RdgC (302 aa).

It belongs to the RdgC family.

The protein localises to the cytoplasm. It localises to the nucleoid. Functionally, may be involved in recombination. This Actinobacillus pleuropneumoniae serotype 7 (strain AP76) protein is Recombination-associated protein RdgC.